We begin with the raw amino-acid sequence, 134 residues long: Tripartite terminase subunit 2 (134 aa).

The protein belongs to the herpesviridae TRM2 protein family. Associates with TRM1 and TRM3 to form the tripartite terminase complex.

It localises to the host nucleus. Functionally, component of the molecular motor that translocates viral genomic DNA in empty capsid during DNA packaging. Forms a tripartite terminase complex together with TRM1 and TRM3 in the host cytoplasm. Once the complex reaches the host nucleus, it interacts with the capsid portal vertex. This portal forms a ring in which genomic DNA is translocated into the capsid. The sequence is that of Tripartite terminase subunit 2 from Gallus gallus (Chicken).